The following is a 632-amino-acid chain: Arginine--tRNA ligase (632 aa).

Residues 129–139 (ANPVHPLHVGS) carry the 'HIGH' region motif.

Belongs to the class-I aminoacyl-tRNA synthetase family.

Its subcellular location is the cytoplasm. It carries out the reaction tRNA(Arg) + L-arginine + ATP = L-arginyl-tRNA(Arg) + AMP + diphosphate. This Korarchaeum cryptofilum (strain OPF8) protein is Arginine--tRNA ligase.